A 216-amino-acid chain; its full sequence is Uracil phosphoribosyltransferase (216 aa).

5-phospho-alpha-D-ribose 1-diphosphate is bound by residues arginine 85, arginine 110, and 135-143; that span reads DPMVATGYS. Uracil is bound by residues isoleucine 200 and 205–207; that span reads GDA. Residue aspartate 206 coordinates 5-phospho-alpha-D-ribose 1-diphosphate.

The protein belongs to the UPRTase family. Mg(2+) is required as a cofactor.

It carries out the reaction UMP + diphosphate = 5-phospho-alpha-D-ribose 1-diphosphate + uracil. Its pathway is pyrimidine metabolism; UMP biosynthesis via salvage pathway; UMP from uracil: step 1/1. Its activity is regulated as follows. Allosterically activated by GTP. Functionally, catalyzes the conversion of uracil and 5-phospho-alpha-D-ribose 1-diphosphate (PRPP) to UMP and diphosphate. This Burkholderia multivorans (strain ATCC 17616 / 249) protein is Uracil phosphoribosyltransferase.